We begin with the raw amino-acid sequence, 430 residues long: Small ribosomal subunit protein uS3m (430 aa).

The protein belongs to the universal ribosomal protein uS3 family.

It localises to the mitochondrion. The sequence is that of Small ribosomal subunit protein uS3m (RPS3) from Marchantia polymorpha (Common liverwort).